We begin with the raw amino-acid sequence, 512 residues long: Opioid growth factor receptor-like protein 1 (512 aa).

3 disordered regions span residues 1-72, 323-469, and 488-512; these read MGNI…ETGT, IWGP…TCCK, and SLSPGTSNSNVTELKVEGSETGPFT. Acidic residues-rich tracts occupy residues 28 to 54 and 62 to 71; these read GGEEEQQEAEEEEESEGTEQREDDNEE and TNEGGEEETG. The span at 328-337 shows a compositional bias: basic and acidic residues; that stretch reads DKQKADENKA. A compositionally biased stretch (basic residues) spans 347 to 361; sequence QKKHSHVEKKSRPAK. Residues 408 to 421 show a composition bias toward polar residues; that stretch reads TVTSENNSSKTGQT. Residues 449–468 are compositionally biased toward basic and acidic residues; the sequence is RSLDTEHDLKRPEADRETCC. The span at 490-499 shows a compositional bias: polar residues; the sequence is SPGTSNSNVT.

This sequence belongs to the opioid growth factor receptor family.

This Xenopus tropicalis (Western clawed frog) protein is Opioid growth factor receptor-like protein 1 (ogfrl1).